The primary structure comprises 489 residues: Long chain base biosynthesis protein 2d (489 aa).

The helical transmembrane segment at 4–24 (LPYVTALTTLFSYGLLFAFGQ) threads the bilayer. K311 bears the N6-(pyridoxal phosphate)lysine mark.

The protein belongs to the class-II pyridoxal-phosphate-dependent aminotransferase family. Heterodimer with LCB1. Component of the serine palmitoyltransferase (SPT) complex, composed of LCB1 and LCB2. It depends on pyridoxal 5'-phosphate as a cofactor.

It is found in the endoplasmic reticulum membrane. It carries out the reaction L-serine + hexadecanoyl-CoA + H(+) = 3-oxosphinganine + CO2 + CoA. It functions in the pathway lipid metabolism; sphingolipid metabolism. In terms of biological role, serine palmitoyltransferase (SPT). The heterodimer formed with LCB1 constitutes the catalytic core. The chain is Long chain base biosynthesis protein 2d from Oryza sativa subsp. japonica (Rice).